A 373-amino-acid polypeptide reads, in one-letter code: Cell division protein FtsZ 1 (373 aa).

GTP-binding positions include 51 to 55 (GAGCN), 138 to 140 (GTG), Glu-169, Arg-173, and Asp-216. The tract at residues 354–373 (EESYFGEEERRPIKLDLDEL) is disordered. Basic and acidic residues predominate over residues 360–373 (EEERRPIKLDLDEL).

The protein belongs to the FtsZ family. Homodimer. Polymerizes to form a dynamic ring structure in a strictly GTP-dependent manner. Interacts directly with several other division proteins.

The protein localises to the cytoplasm. Essential cell division protein that forms a contractile ring structure (Z ring) at the future cell division site. The regulation of the ring assembly controls the timing and the location of cell division. One of the functions of the FtsZ ring is to recruit other cell division proteins to the septum to produce a new cell wall between the dividing cells. Binds GTP and shows GTPase activity. The protein is Cell division protein FtsZ 1 of Thermococcus kodakarensis (strain ATCC BAA-918 / JCM 12380 / KOD1) (Pyrococcus kodakaraensis (strain KOD1)).